Here is a 65-residue protein sequence, read N- to C-terminus: Large ribosomal subunit protein bL35 (65 aa).

Belongs to the bacterial ribosomal protein bL35 family.

The polypeptide is Large ribosomal subunit protein bL35 (Thermoanaerobacter sp. (strain X514)).